The following is a 125-amino-acid chain: Splicing factor 3B subunit 6 (125 aa).

The interaction with pre-mRNA branch site stretch occupies residues 16–29 (EVNRILYIRNLPYK). The 76-residue stretch at 19-94 (RILYIRNLPY…RYLVVLYYNA (76 aa)) folds into the RRM domain. K29 bears the N6-acetyllysine; alternate mark. K29 participates in a covalent cross-link: Glycyl lysine isopeptide (Lys-Gly) (interchain with G-Cter in SUMO2); alternate. At K41 the chain carries N6-acetyllysine.

In terms of assembly, component of the 17S U2 SnRNP complex, a ribonucleoprotein complex that contains small nuclear RNA (snRNA) U2 and a number of specific proteins. Part of the SF3B subcomplex of the 17S U2 SnRNP complex. SF3B associates with the splicing subcomplex SF3A and a 12S RNA unit to form the U2 small nuclear ribonucleoproteins complex (U2 snRNP). Within the SF3B complex interacts directly with SF3B1. Component of the minor spliceosome, which splices U12-type introns.

The protein resides in the nucleus. Its function is as follows. Component of the 17S U2 SnRNP complex of the spliceosome, a large ribonucleoprotein complex that removes introns from transcribed pre-mRNAs. The 17S U2 SnRNP complex (1) directly participates in early spliceosome assembly and (2) mediates recognition of the intron branch site during pre-mRNA splicing by promoting the selection of the pre-mRNA branch-site adenosine, the nucleophile for the first step of splicing. Within the 17S U2 SnRNP complex, SF3B6 is part of the SF3B subcomplex, which is required for 'A' complex assembly formed by the stable binding of U2 snRNP to the branchpoint sequence in pre-mRNA. Sequence independent binding of SF3A and SF3B subcomplexes upstream of the branch site is essential, it may anchor U2 snRNP to the pre-mRNA. Within the 17S U2 SnRNP complex, SF3B6 directly contacts the pre-mRNA branch site adenosine for the first catalytic step of splicing. SF3B6 stabilizes the intron branch site-U2 snRNA duplex, thereby promoting-binding of introns with poor sequence complementarity. Also acts as a component of the minor spliceosome, which is involved in the splicing of U12-type introns in pre-mRNAs. The protein is Splicing factor 3B subunit 6 (Sf3b6) of Mus musculus (Mouse).